Consider the following 163-residue polypeptide: Nucleotide-binding protein CGSHiGG_08790 (163 aa).

The protein belongs to the YajQ family.

Its function is as follows. Nucleotide-binding protein. The chain is Nucleotide-binding protein CGSHiGG_08790 from Haemophilus influenzae (strain PittGG).